The sequence spans 565 residues: DNA ligase B (565 aa).

The active-site N6-AMP-lysine intermediate is K130.

Belongs to the NAD-dependent DNA ligase family. LigB subfamily.

It carries out the reaction NAD(+) + (deoxyribonucleotide)n-3'-hydroxyl + 5'-phospho-(deoxyribonucleotide)m = (deoxyribonucleotide)n+m + AMP + beta-nicotinamide D-nucleotide.. Catalyzes the formation of phosphodiester linkages between 5'-phosphoryl and 3'-hydroxyl groups in double-stranded DNA using NAD as a coenzyme and as the energy source for the reaction. The protein is DNA ligase B of Yersinia enterocolitica serotype O:8 / biotype 1B (strain NCTC 13174 / 8081).